We begin with the raw amino-acid sequence, 1523 residues long: Slit homolog 3 protein (1523 aa).

An N-terminal signal peptide occupies residues 1–33 (MAPGRTGAGAAVRARLALALALASILSGPPAAA). One can recognise an LRRNT domain in the interval 34-61 (CPTKCTCSAASVDCHGLGLRAVPRGIPR). LRR repeat units follow at residues 62 to 83 (NAERLDLDRNNITRITKMDFTG), 86 to 107 (NLRVLHLEDNQVSVIERGAFQD), 110 to 131 (QLERLRLNKNKLQVLPELLFQS), 134 to 155 (KLTRLDLSENQIQGIPRKAFRG), 158 to 179 (GVKNLQLDNNHISCIEDGAFRA), and 182 to 203 (DLEILTLNNNNISRILVTSFNH). An N-linked (GlcNAc...) asparagine glycan is attached at Asn-72. N-linked (GlcNAc...) asparagine glycosylation occurs at Asn-192. The LRRCT 1 domain occupies 215 to 265 (NHLYCDCHLAWLSDWLRQRRTIGQFTLCMAPVHLRGFSVADVQKKEYVCPG). Residues 271 to 307 (PACNANSLSCPSACSCSNNIVDCRGKGLTEIPANLPE) form the LRRNT 2 domain. Cys-284 and Cys-293 are disulfide-bonded. LRR repeat units follow at residues 308–329 (GIVEIRLEQNSIKSIPAGAFIQ), 332–353 (KLKRIDISKNQISDIAPDAFQG), 356–377 (SLTSLVLYGNKITEIPKGLFDG), 380–401 (SLQLLLLNANKINCLRVNTFQD), and 404–425 (NLNLLSLYDNKLQTISKGLFAP). The 51-residue stretch at 437-487 (NPFVCDCHLKWLADYLQDNPIETSGARCSSPRRLANKRISQIKSKKFRCSG) folds into the LRRCT 2 domain. 4 disulfides stabilise this stretch: Cys-441–Cys-464, Cys-443–Cys-485, Cys-505–Cys-511, and Cys-509–Cys-518. An LRRNT 3 domain is found at 496 to 532 (SSECFMDLVCPEKCRCEGTIVDCSNQKLSRIPSHLPE). 5 LRR repeats span residues 533 to 554 (YTTDLRLNDNDIAVLEATGIFK), 558 to 579 (NLRKINLSNNRIKEVREGAFDG), 582 to 603 (GVQELMLTGNQLETMHGRMFRG), 606 to 627 (GLKTLMLRSNLISCVNNDTFAG), and 630 to 651 (SVRLLSLYDNRITTISPGAFTT). The N-linked (GlcNAc...) asparagine glycan is linked to Asn-563. Asn-622 is a glycosylation site (N-linked (GlcNAc...) asparagine). Residues 663 to 713 (NPFNCNCHMAWLGRWLRKRRIVSGNPRCQKPFFLKEIPIQDVAIQDFTCEG) enclose the LRRCT 3 domain. Disulfide bonds link Cys-667/Cys-690 and Cys-669/Cys-711. Positions 716–752 (ENSCQLSPRCPEQCTCVETVVRCSNRGLHTLPKGMPK) constitute an LRRNT 4 domain. LRR repeat units lie at residues 753–774 (DVTELYLEGNHLTAVPKELSTF), 776–797 (QLTLIDLSNNSISMLTNHTFSN), 800–821 (HLSTLILSYNRLRCIPVHAFNG), and 824–845 (SLRVLTLHGNDISSVPEGSFND). N-linked (GlcNAc...) asparagine glycans are attached at residues Asn-784, Asn-792, and Asn-797. The region spanning 857-907 (NPLHCDCSLRWLSEWIKAGYKEPGIARCSSPESMADRLLLTTPTHRFQCKG) is the LRRCT 4 domain. EGF-like domains lie at 918–953 (NACLSSPCKNNGTCSQDPVEQYRCTCPYSYKGKDCT), 955–994 (PINTCVQNPCQHGGTCHLSESHRDGFSCSCPLGFEGQRCE), 996–1032 (NPDDCEDNDCENSATCVDGINNYACVCPPNYTGELCD), 1034–1072 (VIDYCVPEMNLCQHEAKCISLDKGFRCECVPGYSGKLCE), 1074–1110 (DNDDCVAHKCRHGAQCVDAVNGYTCICPQGFSGLFCE), and 1119–1155 (QTSPCDQYECQNGAQCIVVQQEPTCRCPPGFAGPRCE). 18 cysteine pairs are disulfide-bonded: Cys-920/Cys-931, Cys-925/Cys-941, Cys-943/Cys-952, Cys-959/Cys-970, Cys-964/Cys-982, Cys-984/Cys-993, Cys-1000/Cys-1011, Cys-1005/Cys-1020, Cys-1022/Cys-1031, Cys-1038/Cys-1051, Cys-1045/Cys-1060, Cys-1062/Cys-1071, Cys-1078/Cys-1089, Cys-1083/Cys-1098, Cys-1100/Cys-1109, Cys-1123/Cys-1134, Cys-1128/Cys-1143, and Cys-1145/Cys-1154. N-linked (GlcNAc...) asparagine glycosylation occurs at Asn-928. Asn-1025 is a glycosylation site (N-linked (GlcNAc...) asparagine). A Laminin G-like domain is found at 1158-1332 (ITVNFVGKDS…PQSLGVSPGC (175 aa)). N-linked (GlcNAc...) asparagine glycosylation is found at Asn-1181 and Asn-1247. 5 cysteine pairs are disulfide-bonded: Cys-1305/Cys-1332, Cys-1355/Cys-1364, Cys-1372/Cys-1382, Cys-1377/Cys-1391, and Cys-1393/Cys-1402. EGF-like domains are found at residues 1340–1365 (HGLCRSVEKDSVVCECHPGWTGPLCD) and 1368–1403 (AQDPCLGHSCSHGTCVATGNSYVCKCAEGYEGPLCD). N-linked (GlcNAc...) asparagine glycosylation occurs at Asn-1406. In terms of domain architecture, EGF-like 9 spans 1408–1444 (SANACSAFKCHHGQCHISDRGEPYCLCQPGFSGNHCE). Disulfide bonds link Cys-1412–Cys-1422, Cys-1417–Cys-1432, Cys-1434–Cys-1443, Cys-1449–Cys-1487, Cys-1467–Cys-1501, Cys-1478–Cys-1517, and Cys-1482–Cys-1519. Positions 1449–1523 (CLGEIVREAI…HLECGCRECS (75 aa)) constitute a CTCK domain.

The protein localises to the secreted. In terms of biological role, may act as molecular guidance cue in cellular migration, and function may be mediated by interaction with roundabout homolog receptors. The sequence is that of Slit homolog 3 protein (Slit3) from Rattus norvegicus (Rat).